Here is a 362-residue protein sequence, read N- to C-terminus: MPRIETEVRLDFKDVLIRPKRSTLKSRSQVDVQREFRFLNSKRTWSGVPVIAANMDTVGTFEMAVELAKLEFITCVHKHYTPQDWATFAAKHPDVLPTVAVSGGSSAADVEKITAILKSHPDIRFICLDVANGYSEVFVQAVRNVRSAFPEHTIIAGNVVTGEMVEELLLSGADIIKVGIGPGSVCTTRKQTGVGYPQLSAVLECADAAHGLNGHVISDGGCTCPGDVAKAFGAGADFVMLGGMLAGHDESGGDKIEINGKLLKKFYGMSSSEAMKKHNGGVAEYRASEGKSVTVPYRGPVSGTCKEILGGVRSTCTYVGASKLKEISKRTTFIRVSQQLNEVFGRAPNEQEEQVSKKQKTG.

NADP(+) contacts are provided by residues 26–27, Lys78, 129–131, and 180–181; these read SR, DVA, and IG. Residues Gly181, Gly183, and Cys186 each coordinate K(+). The Thioimidate intermediate role is filled by Cys186. Thr188 acts as the Proton donor/acceptor in catalysis. Arg189 lines the K(+) pocket. GMP contacts are provided by residues 219 to 221, 242 to 243, 268 to 270, and 286 to 290; these read DGG, GG, GMS, and RASEG. Residues Met269, 285–286, and 314–317 each bind NADP(+); these read YR and STCT.

The protein belongs to the IMPDH/GMPR family.

It catalyses the reaction IMP + NH4(+) + NADP(+) = GMP + NADPH + 2 H(+). Catalyzes the irreversible NADPH-dependent deamination of GMP to IMP. It functions in the conversion of nucleobase, nucleoside and nucleotide derivatives of G to A nucleotides, and in maintaining the intracellular balance of A and G nucleotides. This chain is GMP reductase, found in Phytophthora infestans (Potato late blight agent).